A 637-amino-acid polypeptide reads, in one-letter code: Threonine--tRNA ligase (637 aa).

A TGS domain is found at M1–T61. The tract at residues D242 to P532 is catalytic. Zn(2+) is bound by residues C333, H384, and H509.

Belongs to the class-II aminoacyl-tRNA synthetase family. Homodimer. Requires Zn(2+) as cofactor.

It localises to the cytoplasm. It carries out the reaction tRNA(Thr) + L-threonine + ATP = L-threonyl-tRNA(Thr) + AMP + diphosphate + H(+). Catalyzes the attachment of threonine to tRNA(Thr) in a two-step reaction: L-threonine is first activated by ATP to form Thr-AMP and then transferred to the acceptor end of tRNA(Thr). Also edits incorrectly charged L-seryl-tRNA(Thr). The polypeptide is Threonine--tRNA ligase (Clostridium kluyveri (strain NBRC 12016)).